The sequence spans 196 residues: Glycerol-3-phosphate acyltransferase (196 aa).

4 consecutive transmembrane segments (helical) span residues L4 to I24, P80 to F100, A114 to F134, and A155 to W175.

It belongs to the PlsY family. In terms of assembly, probably interacts with PlsX.

The protein localises to the cell inner membrane. The catalysed reaction is an acyl phosphate + sn-glycerol 3-phosphate = a 1-acyl-sn-glycero-3-phosphate + phosphate. It participates in lipid metabolism; phospholipid metabolism. Catalyzes the transfer of an acyl group from acyl-phosphate (acyl-PO(4)) to glycerol-3-phosphate (G3P) to form lysophosphatidic acid (LPA). This enzyme utilizes acyl-phosphate as fatty acyl donor, but not acyl-CoA or acyl-ACP. This Idiomarina loihiensis (strain ATCC BAA-735 / DSM 15497 / L2-TR) protein is Glycerol-3-phosphate acyltransferase.